The sequence spans 244 residues: CTD nuclear envelope phosphatase 1 (244 aa).

A helical transmembrane segment spans residues 7–29; that stretch reads LLGLRTFVAFAAKLWSFFIYLLR. The FCP1 homology domain occupies 57 to 224; it reads AQVKRKILVL…LNLLPMLDAL (168 aa).

This sequence belongs to the dullard family. In terms of assembly, (Microbial infection) Interacts with Chandipura virus matrix protein. As to quaternary structure, interacts with CNEP1R1; the complex dephosphorylates LPIN1 and LPIN2. In terms of tissue distribution, muscle specific with lower expression in other metabolic tissues.

The protein localises to the endoplasmic reticulum membrane. It is found in the nucleus membrane. It catalyses the reaction O-phospho-L-seryl-[protein] + H2O = L-seryl-[protein] + phosphate. The catalysed reaction is O-phospho-L-threonyl-[protein] + H2O = L-threonyl-[protein] + phosphate. Its function is as follows. Serine/threonine protein phosphatase forming with CNEP1R1 an active phosphatase complex that dephosphorylates and may activate LPIN1 and LPIN2. LPIN1 and LPIN2 are phosphatidate phosphatases that catalyze the conversion of phosphatidic acid to diacylglycerol and control the metabolism of fatty acids at different levels. May indirectly modulate the lipid composition of nuclear and/or endoplasmic reticulum membranes and be required for proper nuclear membrane morphology and/or dynamics. May also indirectly regulate the production of lipid droplets and triacylglycerol. May antagonize BMP signaling. In Homo sapiens (Human), this protein is CTD nuclear envelope phosphatase 1 (CTDNEP1).